A 171-amino-acid polypeptide reads, in one-letter code: Dual-action ribosomal maturation protein DarP (171 aa).

The tract at residues 1-30 (MPKRPAENPEQSDDFVSKSQKKREMAERQE) is disordered.

Belongs to the DarP family.

The protein resides in the cytoplasm. In terms of biological role, member of a network of 50S ribosomal subunit biogenesis factors which assembles along the 30S-50S interface, preventing incorrect 23S rRNA structures from forming. Promotes peptidyl transferase center (PTC) maturation. The chain is Dual-action ribosomal maturation protein DarP from Idiomarina loihiensis (strain ATCC BAA-735 / DSM 15497 / L2-TR).